Reading from the N-terminus, the 418-residue chain is Elongation factor 1-gamma 2 (418 aa).

In terms of domain architecture, GST N-terminal spans Met-1–Pro-82. In terms of domain architecture, GST C-terminal spans Ser-87 to Val-215. The tract at residues Glu-210–Leu-265 is disordered. The segment covering Pro-221–Lys-246 has biased composition (basic and acidic residues). One can recognise an EF-1-gamma C-terminal domain in the interval Pro-258 to Lys-418.

As to quaternary structure, EF-1 is composed of four subunits: alpha, beta, delta, and gamma.

Probably plays a role in anchoring the complex to other cellular components. The protein is Elongation factor 1-gamma 2 of Oryza sativa subsp. japonica (Rice).